Here is a 251-residue protein sequence, read N- to C-terminus: Capsid protein (251 aa).

A Bipartite nuclear localization signal motif is present at residues 3-20 (KRDAPWRSMAGTSKVSRN). Residues 35–49 (KAAAWVNRPMYRKPR) carry the Nuclear localization signal motif. Residues 63 to 80 (CEGPCKVQSYEQRHDISH) fold into a zinc finger. Positions 96–117 (ITHRVGKRFCVKSVYILGKIWM) match the Nuclear export signal motif. The short motif at 195–242 (KRFWKVNNYVVYNHQEAGKYENHTENALLLYMACTHASNPVYATLKIR) is the Bipartite nuclear localization signal element.

It belongs to the geminiviridae capsid protein family. Homomultimer. Binds to single-stranded and double-stranded viral DNA. Interacts (via nuclear localization signals) with host importin alpha-1a.

It localises to the virion. The protein localises to the host nucleus. Its function is as follows. Encapsidates the viral DNA into characteristic twinned ('geminate') particles. Binds the genomic viral ssDNA and shuttles it into and out of the cell nucleus. The CP of bipartite geminiviruses is not required for cell-to-cell or systemic movement. This chain is Capsid protein, found in Cabbage leaf curl virus (isolate Jamaica) (CaLCuV).